The following is a 464-amino-acid chain: Probable 1,4-beta-D-glucan cellobiohydrolase C (464 aa).

The N-terminal stretch at methionine 1 to alanine 19 is a signal peptide. Residues glutamine 20–leucine 55 form the CBM1 domain. 2 cysteine pairs are disulfide-bonded: cysteine 27/cysteine 44 and cysteine 38/cysteine 54. Positions threonine 59–threonine 102 are thr-rich linker. Residues serine 65–threonine 100 are compositionally biased toward low complexity. Residues serine 65–asparagine 108 form a disordered region. The segment at glycine 103 to phenylalanine 464 is catalytic. Aspartate 194 is an active-site residue. Cystine bridges form between cysteine 195–cysteine 254 and cysteine 386–cysteine 433. Aspartate 240 (proton donor) is an active-site residue. The Nucleophile role is filled by aspartate 419.

Belongs to the glycosyl hydrolase 6 (cellulase B) family.

It localises to the secreted. It catalyses the reaction Hydrolysis of (1-&gt;4)-beta-D-glucosidic linkages in cellulose and cellotetraose, releasing cellobiose from the non-reducing ends of the chains.. In terms of biological role, the biological conversion of cellulose to glucose generally requires three types of hydrolytic enzymes: (1) Endoglucanases which cut internal beta-1,4-glucosidic bonds; (2) Exocellobiohydrolases that cut the disaccharide cellobiose from the non-reducing end of the cellulose polymer chain; (3) Beta-1,4-glucosidases which hydrolyze the cellobiose and other short cello-oligosaccharides to glucose. The sequence is that of Probable 1,4-beta-D-glucan cellobiohydrolase C (cbhC) from Aspergillus clavatus (strain ATCC 1007 / CBS 513.65 / DSM 816 / NCTC 3887 / NRRL 1 / QM 1276 / 107).